Here is a 402-residue protein sequence, read N- to C-terminus: MGTSTTESVVACEFCGERTAVLFCRADTAKLCLPCDQHVHSANLLSRKHVRSQICDNCSKEPVSVRCFTDNLVLCQECDWDVHGSCSSSATHERSAVEGFSGCPSVLELAAVWGIDLKGKKKEDDEDELTKNFGMGLDSWGSGSNIVQELIVPYDVSCKKQSFSFGRSKQVVFEQLELLKRGFVEGEGEIMVPEGINGGGSISQPSPTTSFTSLLMSQSLCGNGMQWNATNHSTGQNTQIWDFNLGQSRNPDEPSPVETKGSTFTFNNVTHLKNDTRTTNMNAFKESYQQEDSVHSTSTKGQETSKSNNIPAAIHSHKSSNDSCGLHCTEHIAITSNRATRLVAVTNADLEQMAQNRDNAMQRYKEKKKTRRYDKTIRYETRKARAETRLRVKGRFVKATDP.

Residues Cys-12, Cys-15, Cys-35, His-40, Cys-55, Cys-58, Cys-78, and His-83 each coordinate Zn(2+). Residues 12 to 54 (CEFCGERTAVLFCRADTAKLCLPCDQHVHSANLLSRKHVRSQI) form a B box-type 1; atypical zinc finger. The B box-type 2; atypical zinc-finger motif lies at 55–97 (CDNCSKEPVSVRCFTDNLVLCQECDWDVHGSCSSSATHERSAV). A disordered region spans residues 287-322 (SYQQEDSVHSTSTKGQETSKSNNIPAAIHSHKSSND). Positions 295–310 (HSTSTKGQETSKSNNI) are enriched in polar residues. Residues 345-372 (VTNADLEQMAQNRDNAMQRYKEKKKTRR) are a coiled coil. In terms of domain architecture, CCT spans 357–399 (RDNAMQRYKEKKKTRRYDKTIRYETRKARAETRLRVKGRFVKA).

It belongs to the CONSTANS family.

It is found in the nucleus. In Arabidopsis thaliana (Mouse-ear cress), this protein is Zinc finger protein CONSTANS-LIKE 14 (COL14).